Consider the following 265-residue polypeptide: uncharacterized protein (265 aa).

Residues 1-22 (MGYFKRVLLYIIVMVLSVFIIG) form the signal peptide. Residue C23 is the site of N-palmitoyl cysteine attachment. Residue C23 is the site of S-diacylglycerol cysteine attachment.

Belongs to the staphylococcal tandem lipoprotein family.

The protein resides in the cell membrane. This is an uncharacterized protein from Staphylococcus aureus (strain MSSA476).